The chain runs to 513 residues: ATP synthase subunit alpha (513 aa).

Residue 169–176 participates in ATP binding; that stretch reads GDRQTGKT.

This sequence belongs to the ATPase alpha/beta chains family. F-type ATPases have 2 components, CF(1) - the catalytic core - and CF(0) - the membrane proton channel. CF(1) has five subunits: alpha(3), beta(3), gamma(1), delta(1), epsilon(1). CF(0) has three main subunits: a(1), b(2) and c(9-12). The alpha and beta chains form an alternating ring which encloses part of the gamma chain. CF(1) is attached to CF(0) by a central stalk formed by the gamma and epsilon chains, while a peripheral stalk is formed by the delta and b chains.

It is found in the cell inner membrane. The catalysed reaction is ATP + H2O + 4 H(+)(in) = ADP + phosphate + 5 H(+)(out). Functionally, produces ATP from ADP in the presence of a proton gradient across the membrane. The alpha chain is a regulatory subunit. The chain is ATP synthase subunit alpha from Ruthia magnifica subsp. Calyptogena magnifica.